We begin with the raw amino-acid sequence, 450 residues long: tRNA modification GTPase MnmE (450 aa).

Arginine 23, glutamate 80, and arginine 123 together coordinate (6S)-5-formyl-5,6,7,8-tetrahydrofolate. Residues 219–372 form the TrmE-type G domain; sequence GLHVVLAGKP…LRQRLLQLAG (154 aa). Residue asparagine 229 coordinates K(+). GTP is bound by residues 229–234, 248–254, 273–276, and 353–355; these read NVGKSS, TPIAGTT, DTAG, and SAR. A Mg(2+)-binding site is contributed by serine 233. Positions 248, 250, and 253 each coordinate K(+). Position 254 (threonine 254) interacts with Mg(2+). Lysine 450 contacts (6S)-5-formyl-5,6,7,8-tetrahydrofolate.

It belongs to the TRAFAC class TrmE-Era-EngA-EngB-Septin-like GTPase superfamily. TrmE GTPase family. In terms of assembly, homodimer. Heterotetramer of two MnmE and two MnmG subunits. Requires K(+) as cofactor.

The protein localises to the cytoplasm. In terms of biological role, exhibits a very high intrinsic GTPase hydrolysis rate. Involved in the addition of a carboxymethylaminomethyl (cmnm) group at the wobble position (U34) of certain tRNAs, forming tRNA-cmnm(5)s(2)U34. In Bordetella bronchiseptica (strain ATCC BAA-588 / NCTC 13252 / RB50) (Alcaligenes bronchisepticus), this protein is tRNA modification GTPase MnmE.